We begin with the raw amino-acid sequence, 308 residues long: Cyclopropane mycolic acid synthase 2 (308 aa).

S-adenosyl-L-methionine contacts are provided by residues 44 to 45, 79 to 87, 105 to 110, and 137 to 138; these read YS, LLDIGCGWG, TLSANQ, and WE. Cys-290 is a catalytic residue.

It belongs to the CFA/CMAS family. As to quaternary structure, homodimer.

It localises to the cytoplasm. The enzyme catalyses a 1-acyl-2-(9Z)-enoyl-sn-glycero-3-phospholipid + S-adenosyl-L-methionine = a 1-acyl-2-(9-cyclopronane)-acyl-sn-glycero-3-phospholipid + S-adenosyl-L-homocysteine + H(+). It participates in lipid metabolism; mycolic acid biosynthesis. Functionally, catalyzes the formation of trans cyclopropanated ketomycolate or methoxymycolate through the conversion of a double bond to a cyclopropane ring at the proximal position of an oxygenated mycolic acid via the transfer of a methylene group from S-adenosyl-L-methionine. In the absence of MmaA2, CmaA2 has a non-specific cis-cyclopropanating activity and is able to catalyze the conversion of a double bond to a cis cyclopropane ring at the distal position of an alpha mycolic acid. Cyclopropanated mycolic acids are key factors participating in cell envelope permeability, host immunomodulation and persistence. This Mycobacterium leprae (strain TN) protein is Cyclopropane mycolic acid synthase 2 (cmaA2).